A 194-amino-acid polypeptide reads, in one-letter code: FMN-dependent NADH:quinone oxidoreductase (194 aa).

FMN is bound by residues serine 9, 15–17 (SIS), and 85–88 (MYNF).

It belongs to the azoreductase type 1 family. As to quaternary structure, homodimer. FMN is required as a cofactor.

The catalysed reaction is 2 a quinone + NADH + H(+) = 2 a 1,4-benzosemiquinone + NAD(+). It catalyses the reaction N,N-dimethyl-1,4-phenylenediamine + anthranilate + 2 NAD(+) = 2-(4-dimethylaminophenyl)diazenylbenzoate + 2 NADH + 2 H(+). Quinone reductase that provides resistance to thiol-specific stress caused by electrophilic quinones. Its function is as follows. Also exhibits azoreductase activity. Catalyzes the reductive cleavage of the azo bond in aromatic azo compounds to the corresponding amines. This chain is FMN-dependent NADH:quinone oxidoreductase, found in Xanthomonas oryzae pv. oryzae (strain MAFF 311018).